The chain runs to 455 residues: Homogentisate 1,2-dioxygenase (455 aa).

The active-site Proton acceptor is histidine 308. Histidine 351 and glutamate 357 together coordinate Fe cation. Homogentisate contacts are provided by tyrosine 366 and histidine 387. Residue histidine 387 participates in Fe cation binding.

This sequence belongs to the homogentisate dioxygenase family. As to quaternary structure, hexamer; dimer of trimers. The cofactor is Fe cation.

It carries out the reaction homogentisate + O2 = 4-maleylacetoacetate + H(+). The protein operates within amino-acid degradation; L-phenylalanine degradation; acetoacetate and fumarate from L-phenylalanine: step 4/6. Involved in the catabolism of homogentisate (2,5-dihydroxyphenylacetate or 2,5-OH-PhAc), a central intermediate in the degradation of phenylalanine and tyrosine. Catalyzes the oxidative ring cleavage of the aromatic ring of homogentisate to yield maleylacetoacetate. The polypeptide is Homogentisate 1,2-dioxygenase (Xanthomonas campestris pv. campestris (strain 8004)).